We begin with the raw amino-acid sequence, 307 residues long: MLNFTDVTEFILLGLTSRREWQVLFFIIFLVVYIITMVGNIGMMVLIKVSPQLNNPMYFFLSHLSFVDVWFSSNVTPKMLENLLSDKKTITYAGCLVQCFFFIALVHVEIFILAAMAFDRYMAIGNPLLYGSKMSRVVCIRLITFPYIYGFLTSLAATLWTYGLYFCGKIEINHFYCADPPLIKMACAGTFVKEYTMIILAGINFTYSLTVIIISYLFILIAILRMRSAEGRQKAFSTCGSHLTAVIIFYGTLIFMYLRRPTEESVEQGKMVAVFYTTVIPMLNPMIYSLRNKDVKKAMMKVISRSC.

Residues 1 to 23 (MLNFTDVTEFILLGLTSRREWQV) are Extracellular-facing. N-linked (GlcNAc...) asparagine glycosylation is present at Asn3. A helical membrane pass occupies residues 24 to 44 (LFFIIFLVVYIITMVGNIGMM). Topologically, residues 45–52 (VLIKVSPQ) are cytoplasmic. The chain crosses the membrane as a helical span at residues 53–73 (LNNPMYFFLSHLSFVDVWFSS). Residues 74 to 97 (NVTPKMLENLLSDKKTITYAGCLV) are Extracellular-facing. Residues Cys95 and Cys187 are joined by a disulfide bond. The helical transmembrane segment at 98–118 (QCFFFIALVHVEIFILAAMAF) threads the bilayer. At 119 to 137 (DRYMAIGNPLLYGSKMSRV) the chain is on the cytoplasmic side. The helical transmembrane segment at 138–158 (VCIRLITFPYIYGFLTSLAAT) threads the bilayer. At 159–194 (LWTYGLYFCGKIEINHFYCADPPLIKMACAGTFVKE) the chain is on the extracellular side. The chain crosses the membrane as a helical span at residues 195-215 (YTMIILAGINFTYSLTVIIIS). The Cytoplasmic segment spans residues 216–235 (YLFILIAILRMRSAEGRQKA). Residues 236–256 (FSTCGSHLTAVIIFYGTLIFM) form a helical membrane-spanning segment. The Extracellular segment spans residues 257–269 (YLRRPTEESVEQG). A helical membrane pass occupies residues 270–290 (KMVAVFYTTVIPMLNPMIYSL). At 291-307 (RNKDVKKAMMKVISRSC) the chain is on the cytoplasmic side.

This sequence belongs to the G-protein coupled receptor 1 family.

The protein localises to the cell membrane. Its function is as follows. Odorant receptor. In Homo sapiens (Human), this protein is Olfactory receptor 5M3 (OR5M3).